A 156-amino-acid chain; its full sequence is Small ribosomal subunit protein uS7 (156 aa).

Part of the 30S ribosomal subunit. Contacts proteins S9 and S11. Binds to the C-terminus of IF3 and to the C-terminus of Era.

Functionally, one of the primary rRNA binding proteins, it binds directly to 3'-end of the 16S rRNA where it nucleates assembly of the head domain of the 30S subunit. Is located at the subunit interface close to the decoding center. Binds mRNA and the E site tRNA blocking its exit path in the ribosome. This blockage implies that this section of the ribosome must be able to move to release the deacetylated tRNA. This Thermus thermophilus (strain ATCC 27634 / DSM 579 / HB8) protein is Small ribosomal subunit protein uS7 (rpsG).